Reading from the N-terminus, the 440-residue chain is Xaa-Pro dipeptidase (440 aa).

Asp241, Asp252, His333, Glu378, and Glu417 together coordinate Mn(2+).

This sequence belongs to the peptidase M24B family. Bacterial-type prolidase subfamily. Requires Mn(2+) as cofactor.

The catalysed reaction is Xaa-L-Pro dipeptide + H2O = an L-alpha-amino acid + L-proline. Its function is as follows. Splits dipeptides with a prolyl residue in the C-terminal position. The polypeptide is Xaa-Pro dipeptidase (Glaesserella parasuis serovar 5 (strain SH0165) (Haemophilus parasuis)).